Consider the following 228-residue polypeptide: Small ribosomal subunit protein uS2 (228 aa).

It belongs to the universal ribosomal protein uS2 family.

The polypeptide is Small ribosomal subunit protein uS2 (Blochmanniella pennsylvanica (strain BPEN)).